Reading from the N-terminus, the 318-residue chain is NADH-ubiquinone oxidoreductase chain 1 (318 aa).

The next 8 helical transmembrane spans lie at 3–23 (LINLLAMIVPVLLAVAFLTLL), 69–89 (MLFIIAPTLALTLALTMWTPL), 102–122 (MLFILALSSLAVYTIMWSGWA), 144–164 (VTLAIIILSLLLMNGSFTLLS), 171–191 (YIWLLIPSWPLAMMWFISTLA), 222–242 (LFFLAEYANIIMMNALTIILF), 253–273 (ELYTINFTIKTLLFTAFFLWI), and 294–314 (LPLTLVMCMWHVALPIMLAGI).

The protein belongs to the complex I subunit 1 family. As to quaternary structure, core subunit of respiratory chain NADH dehydrogenase (Complex I) which is composed of 45 different subunits.

The protein localises to the mitochondrion inner membrane. The catalysed reaction is a ubiquinone + NADH + 5 H(+)(in) = a ubiquinol + NAD(+) + 4 H(+)(out). Its function is as follows. Core subunit of the mitochondrial membrane respiratory chain NADH dehydrogenase (Complex I) which catalyzes electron transfer from NADH through the respiratory chain, using ubiquinone as an electron acceptor. Essential for the catalytic activity and assembly of complex I. This Murina suilla (Brown tube-nosed bat) protein is NADH-ubiquinone oxidoreductase chain 1 (MT-ND1).